Consider the following 446-residue polypeptide: Alkylglycerol monooxygenase (446 aa).

2 helical membrane passes run 43–63 (ATVY…AWKG) and 110–130 (WDSP…YYWF). The region spanning 118-248 (LTFLGVDFGY…LIIWDRMFGT (131 aa)) is the Fatty acid hydroxylase domain. Residues 131-135 (HRMAH) carry the Histidine box-1 motif. The short motif at 144–148 (HQTHH) is the Histidine box-2 element. A helical membrane pass occupies residues 167–187 (YFSWMFYWPMAFCIPPSVFAV). Residues 220 to 224 (HRVHH) carry the Histidine box-3 motif. The next 3 helical transmembrane spans lie at 339–359 (MMHF…KLIL), 362–382 (ATLL…GFIF), and 412–434 (VPYL…GLKA).

Belongs to the sterol desaturase family. TMEM195 subfamily. It depends on Fe cation as a cofactor.

The protein localises to the endoplasmic reticulum membrane. The catalysed reaction is 1-O-(1,2-saturated-alkyl)-sn-glycerol + (6R)-L-erythro-5,6,7,8-tetrahydrobiopterin + O2 = a 1-(1-hydroxyalkyl)-sn-glycerol + (6R)-L-erythro-6,7-dihydrobiopterin + H2O. Its function is as follows. Glyceryl-ether monooxygenase that cleaves the O-alkyl bond of ether lipids. Ether lipids are essential components of brain membranes. The protein is Alkylglycerol monooxygenase (agmo) of Xenopus tropicalis (Western clawed frog).